A 142-amino-acid chain; its full sequence is Universal stress protein D (142 aa).

Belongs to the universal stress protein A family.

The protein localises to the cytoplasm. Required for resistance to DNA-damaging agents. This chain is Universal stress protein D (uspD), found in Escherichia coli O157:H7.